The chain runs to 305 residues: UDP-3-O-acyl-N-acetylglucosamine deacetylase (305 aa).

Zn(2+)-binding residues include histidine 78, histidine 237, and aspartate 241. The active-site Proton donor is histidine 264.

It belongs to the LpxC family. Requires Zn(2+) as cofactor.

The catalysed reaction is a UDP-3-O-[(3R)-3-hydroxyacyl]-N-acetyl-alpha-D-glucosamine + H2O = a UDP-3-O-[(3R)-3-hydroxyacyl]-alpha-D-glucosamine + acetate. Its pathway is glycolipid biosynthesis; lipid IV(A) biosynthesis; lipid IV(A) from (3R)-3-hydroxytetradecanoyl-[acyl-carrier-protein] and UDP-N-acetyl-alpha-D-glucosamine: step 2/6. Catalyzes the hydrolysis of UDP-3-O-myristoyl-N-acetylglucosamine to form UDP-3-O-myristoylglucosamine and acetate, the committed step in lipid A biosynthesis. In Dechloromonas aromatica (strain RCB), this protein is UDP-3-O-acyl-N-acetylglucosamine deacetylase.